The sequence spans 453 residues: Pup--protein ligase (453 aa).

Glu-9 provides a ligand contact to Mg(2+). Arg-53 serves as a coordination point for ATP. Residue Tyr-55 participates in Mg(2+) binding. Asp-57 serves as the catalytic Proton acceptor. Glu-63 provides a ligand contact to Mg(2+). Positions 66 and 420 each coordinate ATP.

It belongs to the Pup ligase/Pup deamidase family. Pup-conjugating enzyme subfamily.

The enzyme catalyses ATP + [prokaryotic ubiquitin-like protein]-L-glutamate + [protein]-L-lysine = ADP + phosphate + N(6)-([prokaryotic ubiquitin-like protein]-gamma-L-glutamyl)-[protein]-L-lysine.. It participates in protein degradation; proteasomal Pup-dependent pathway. It functions in the pathway protein modification; protein pupylation. Functionally, catalyzes the covalent attachment of the prokaryotic ubiquitin-like protein modifier Pup to the proteasomal substrate proteins, thereby targeting them for proteasomal degradation. This tagging system is termed pupylation. The ligation reaction involves the side-chain carboxylate of the C-terminal glutamate of Pup and the side-chain amino group of a substrate lysine. The chain is Pup--protein ligase from Kineococcus radiotolerans (strain ATCC BAA-149 / DSM 14245 / SRS30216).